The chain runs to 217 residues: Cytokinin riboside 5'-monophosphate phosphoribohydrolase LOG7 (217 aa).

Substrate contacts are provided by residues Glu79, 97-98 (RK), 114-120 (GYGTLEE), and Thr126.

It belongs to the LOG family. Expressed in roots and shoots. Detected in the epidermis of the root elongation zone, cotyledon and leaves, in trichomes and pollen.

The protein resides in the cytoplasm. Its subcellular location is the nucleus. The enzyme catalyses N(6)-(dimethylallyl)adenosine 5'-phosphate + H2O = N(6)-dimethylallyladenine + D-ribose 5-phosphate. It catalyses the reaction 9-ribosyl-trans-zeatin 5'-phosphate + H2O = trans-zeatin + D-ribose 5-phosphate. Cytokinin-activating enzyme working in the direct activation pathway. Phosphoribohydrolase that converts inactive cytokinin nucleotides to the biologically active free-base forms. In Arabidopsis thaliana (Mouse-ear cress), this protein is Cytokinin riboside 5'-monophosphate phosphoribohydrolase LOG7 (LOG7).